The primary structure comprises 475 residues: Ribulose bisphosphate carboxylase large chain (475 aa).

Residues methionine 1–serine 2 constitute a propeptide that is removed on maturation. Residue proline 3 is modified to N-acetylproline. N6,N6,N6-trimethyllysine is present on lysine 14. Positions 123 and 173 each coordinate substrate. The active-site Proton acceptor is the lysine 175. Residue lysine 177 coordinates substrate. Mg(2+) is bound by residues lysine 201, aspartate 203, and glutamate 204. Lysine 201 carries the N6-carboxylysine modification. The active-site Proton acceptor is histidine 294. Substrate-binding residues include arginine 295, histidine 327, and serine 379.

This sequence belongs to the RuBisCO large chain family. Type I subfamily. As to quaternary structure, heterohexadecamer of 8 large chains and 8 small chains; disulfide-linked. The disulfide link is formed within the large subunit homodimers. It depends on Mg(2+) as a cofactor. In terms of processing, the disulfide bond which can form in the large chain dimeric partners within the hexadecamer appears to be associated with oxidative stress and protein turnover.

The protein resides in the plastid. Its subcellular location is the chloroplast. The catalysed reaction is 2 (2R)-3-phosphoglycerate + 2 H(+) = D-ribulose 1,5-bisphosphate + CO2 + H2O. The enzyme catalyses D-ribulose 1,5-bisphosphate + O2 = 2-phosphoglycolate + (2R)-3-phosphoglycerate + 2 H(+). In terms of biological role, ruBisCO catalyzes two reactions: the carboxylation of D-ribulose 1,5-bisphosphate, the primary event in carbon dioxide fixation, as well as the oxidative fragmentation of the pentose substrate in the photorespiration process. Both reactions occur simultaneously and in competition at the same active site. The sequence is that of Ribulose bisphosphate carboxylase large chain (rbcL) from Marchantia polymorpha (Common liverwort).